The sequence spans 405 residues: MDHLPMPKFGPLAGLRVVFSGIEIAGPFAGQMFAEWGAEVIWIENVAWADTIRVQPNYPQLSRRNLHALSLNIFKDEGREAFLKLMETTDIFIEASKGPAFARRGITDEVLWQHNPKLVIAHLSGFGQYGTEEYTNLPAYNTIAQAFSGYLIQNGDVDQPMPAFPYTADYFSGLTATTAALAALHKARETGKGESIDIAMYEVMLRMGQYFMMDYFNGGEMCPRMTKGKDPYYAGCGLYKCADGYIVMELVGITQIEECFKDIGLAHLLGTPEIPEGTQLIHRIECPYGPLVEEKLDAWLAAHTIAEVKERFAELNIACAKVLTVPELESNPQYVARESITQWQTMDGRTCKGPNVMPKFKNNPGQIWRGMPSHGMDTAAILKNIGYSENDIQELVSKGLAKVED.

The CoA site is built by Lys97 and Arg104. Asp169 serves as the catalytic Nucleophile.

It belongs to the CoA-transferase III family. CaiB subfamily. As to quaternary structure, homodimer.

Its subcellular location is the cytoplasm. It carries out the reaction crotonobetainyl-CoA + (R)-carnitine = crotonobetaine + (R)-carnitinyl-CoA. The enzyme catalyses 4-(trimethylamino)butanoyl-CoA + (R)-carnitine = (R)-carnitinyl-CoA + 4-(trimethylamino)butanoate. Its pathway is amine and polyamine metabolism; carnitine metabolism. Its function is as follows. Catalyzes the reversible transfer of the CoA moiety from gamma-butyrobetainyl-CoA to L-carnitine to generate L-carnitinyl-CoA and gamma-butyrobetaine. Is also able to catalyze the reversible transfer of the CoA moiety from gamma-butyrobetainyl-CoA or L-carnitinyl-CoA to crotonobetaine to generate crotonobetainyl-CoA. The protein is L-carnitine CoA-transferase of Escherichia coli O17:K52:H18 (strain UMN026 / ExPEC).